The sequence spans 900 residues: 3'-5' exonuclease DinG (900 aa).

The Exonuclease domain maps to 8–161 (VVDLETTGNQ…DEDAATTAQL (154 aa)). One can recognise a Helicase ATP-binding domain in the interval 241–496 (TLVTKELGLT…KSIDLLEQQR (256 aa)). ATP is bound at residue 276–283 (APLGSGKS). A DEAH box motif is present at residues 448–451 (DEAH). Residues 714-883 (YVIEYVSVVE…RYRQKKGDIK (170 aa)) enclose the Helicase C-terminal domain.

This sequence belongs to the helicase family. DinG subfamily. Type 2 sub-subfamily.

In terms of biological role, 3'-5' exonuclease. This chain is 3'-5' exonuclease DinG, found in Staphylococcus saprophyticus subsp. saprophyticus (strain ATCC 15305 / DSM 20229 / NCIMB 8711 / NCTC 7292 / S-41).